Reading from the N-terminus, the 257-residue chain is Phosphonates import ATP-binding protein PhnC (257 aa).

The ABC transporter domain maps to 2 to 246; it reads IEFRNVSKVY…KFAEIYGDVA (245 aa). Residue 35–42 coordinates ATP; that stretch reads GLSGAGKS.

The protein belongs to the ABC transporter superfamily. Phosphonates importer (TC 3.A.1.9.1) family. The complex is composed of two ATP-binding proteins (PhnC), two transmembrane proteins (PhnE) and a solute-binding protein (PhnD).

Its subcellular location is the cell membrane. The enzyme catalyses phosphonate(out) + ATP + H2O = phosphonate(in) + ADP + phosphate + H(+). In terms of biological role, part of the ABC transporter complex PhnCDE involved in phosphonates import. Responsible for energy coupling to the transport system. This Bacillus cereus (strain ATCC 14579 / DSM 31 / CCUG 7414 / JCM 2152 / NBRC 15305 / NCIMB 9373 / NCTC 2599 / NRRL B-3711) protein is Phosphonates import ATP-binding protein PhnC.